Reading from the N-terminus, the 474-residue chain is Aspartyl/glutamyl-tRNA(Asn/Gln) amidotransferase subunit B (474 aa).

The protein belongs to the GatB/GatE family. GatB subfamily. In terms of assembly, heterotrimer of A, B and C subunits.

The catalysed reaction is L-glutamyl-tRNA(Gln) + L-glutamine + ATP + H2O = L-glutaminyl-tRNA(Gln) + L-glutamate + ADP + phosphate + H(+). It carries out the reaction L-aspartyl-tRNA(Asn) + L-glutamine + ATP + H2O = L-asparaginyl-tRNA(Asn) + L-glutamate + ADP + phosphate + 2 H(+). In terms of biological role, allows the formation of correctly charged Asn-tRNA(Asn) or Gln-tRNA(Gln) through the transamidation of misacylated Asp-tRNA(Asn) or Glu-tRNA(Gln) in organisms which lack either or both of asparaginyl-tRNA or glutaminyl-tRNA synthetases. The reaction takes place in the presence of glutamine and ATP through an activated phospho-Asp-tRNA(Asn) or phospho-Glu-tRNA(Gln). The chain is Aspartyl/glutamyl-tRNA(Asn/Gln) amidotransferase subunit B from Limosilactobacillus reuteri (strain DSM 20016) (Lactobacillus reuteri).